A 144-amino-acid polypeptide reads, in one-letter code: Phosphomevalonate dehydratase small subunit (144 aa).

Residue serine 65 is the Proton acceptor of the active site.

This sequence belongs to the AcnX type II small subunit family. Heterodimer composed of a large subunit (PMDh-L) and a small subunit (PMDh-S).

It catalyses the reaction (R)-5-phosphomevalonate = (2E)-3-methyl-5-phosphooxypent-2-enoate + H2O. It functions in the pathway isoprenoid biosynthesis; isopentenyl diphosphate biosynthesis via mevalonate pathway. Component of a hydro-lyase that catalyzes the dehydration of mevalonate 5-phosphate (MVA5P) to form trans-anhydromevalonate 5-phosphate (tAHMP). Involved in the archaeal mevalonate (MVA) pathway, which provides fundamental precursors for isoprenoid biosynthesis, such as isopentenyl diphosphate (IPP) and dimethylallyl diphosphate (DMAPP). This is Phosphomevalonate dehydratase small subunit from Methanosarcina acetivorans (strain ATCC 35395 / DSM 2834 / JCM 12185 / C2A).